The primary structure comprises 524 residues: Alanine aminotransferase 2 (524 aa).

Position 342 is an N6-(pyridoxal phosphate)lysine (lysine 342).

It belongs to the class-I pyridoxal-phosphate-dependent aminotransferase family. Alanine aminotransferase subfamily. As to quaternary structure, homodimer. Requires pyridoxal 5'-phosphate as cofactor.

The enzyme catalyses L-alanine + 2-oxoglutarate = pyruvate + L-glutamate. It functions in the pathway amino-acid degradation; L-alanine degradation via transaminase pathway; pyruvate from L-alanine: step 1/1. Catalyzes the reversible transamination between alanine and 2-oxoglutarate to form pyruvate and glutamate. The protein is Alanine aminotransferase 2 (gpt2) of Xenopus tropicalis (Western clawed frog).